The sequence spans 546 residues: MTTNYIFVTGGVVSSLGKGIAAASLAAILEARGLKVTMMKLDPYINVDPGTMSPTQHGEVFVTEDGAETDLDLGHYERFIRTKMTKRNNFTAGRVYADVLRKERRGDYLGATIQVIPHITNAIKERVISGAAGHDIALVEVGGTVGDIESLPFMEAIRQLAVELGREHTMFMHLTLVPYLVAAGELKTKPTQHSVKELLSIGIQPDILVCRSDRVIPANERKKIALFCNVQEKAVISMKDVDSIYKIPQLIRAQGTDDLVCQRFGITAPAADLSEWEQVIYEEANPTGEVTIGMVGKYIELPDAYKSVNEALKHAGLKNRLSVTIKYIDSQDVESKGTEILEGLDAILVPGGFGDRGIEGKILAAQYARENAVPYLGICLGMQVALIDYARNVANMEGAHSSEFSKDTKFPVVGLITEWIDGDGNVEERTEKSDLGGTMRLGSQLCHLAKGSKARELYGNATVEERHRHRYEVNNNLLPQLEKAGLKISGLSADKKLVEIIEIPNHPWFVAAQFHPEFTSTPRDGHPLFEGFVKAAGENARGEFEK.

The segment at 1–266 (MTTNYIFVTG…DDLVCQRFGI (266 aa)) is amidoligase domain. Ser14 provides a ligand contact to CTP. Ser14 is a binding site for UTP. ATP contacts are provided by residues 15–20 (SLGKGI) and Asp72. The Mg(2+) site is built by Asp72 and Glu140. CTP contacts are provided by residues 147 to 149 (DIE), 187 to 192 (KTKPTQ), and Lys223. UTP is bound by residues 187–192 (KTKPTQ) and Lys223. 239 to 241 (KDV) is an ATP binding site. One can recognise a Glutamine amidotransferase type-1 domain in the interval 291–542 (TIGMVGKYIE…VKAAGENARG (252 aa)). Gly352 contacts L-glutamine. Residue Cys379 is the Nucleophile; for glutamine hydrolysis of the active site. Residues 380 to 383 (LGMQ), Glu403, and Arg470 contribute to the L-glutamine site. Active-site residues include His515 and Glu517.

Belongs to the CTP synthase family. As to quaternary structure, homotetramer.

The catalysed reaction is UTP + L-glutamine + ATP + H2O = CTP + L-glutamate + ADP + phosphate + 2 H(+). The enzyme catalyses L-glutamine + H2O = L-glutamate + NH4(+). It catalyses the reaction UTP + NH4(+) + ATP = CTP + ADP + phosphate + 2 H(+). It participates in pyrimidine metabolism; CTP biosynthesis via de novo pathway; CTP from UDP: step 2/2. Allosterically activated by GTP, when glutamine is the substrate; GTP has no effect on the reaction when ammonia is the substrate. The allosteric effector GTP functions by stabilizing the protein conformation that binds the tetrahedral intermediate(s) formed during glutamine hydrolysis. Inhibited by the product CTP, via allosteric rather than competitive inhibition. Its function is as follows. Catalyzes the ATP-dependent amination of UTP to CTP with either L-glutamine or ammonia as the source of nitrogen. Regulates intracellular CTP levels through interactions with the four ribonucleotide triphosphates. The sequence is that of CTP synthase from Aliivibrio salmonicida (strain LFI1238) (Vibrio salmonicida (strain LFI1238)).